Reading from the N-terminus, the 214-residue chain is Elongation factor Ts (214 aa).

The involved in Mg(2+) ion dislocation from EF-Tu stretch occupies residues 80 to 83; sequence TDFV.

Belongs to the EF-Ts family.

It localises to the cytoplasm. In terms of biological role, associates with the EF-Tu.GDP complex and induces the exchange of GDP to GTP. It remains bound to the aminoacyl-tRNA.EF-Tu.GTP complex up to the GTP hydrolysis stage on the ribosome. The polypeptide is Elongation factor Ts (Syntrophomonas wolfei subsp. wolfei (strain DSM 2245B / Goettingen)).